The sequence spans 299 residues: MAYERFTSAITLLLHWRNRLDPYWKLARGDRPVGFLLLLWPTWWALWLAADGVPPWWTLCVFTTGIWLTRSAGCVINDYTDRWLDPHVERTCTRPLVTGTVSPRNALLMFGTLMLIAFGLVLTMNRLTVLLSVAGLFLAMTYPYLKRYTHLPQVYLGIAFGWGIPMAFAAIQGKVPTLAWLLYVANILWTTAYDTWYAMVDRDDDIKMGAKSTAILFADLDLVVQGVLYTLMLLTLCLVGLRATLSHTYWISLISAVALIGYQFIIARRREPTACFRAFMHNNWVGMTIFAGIALATTH.

8 helical membrane passes run 33–53 (VGFL…ADGV), 56–76 (WWTL…GCVI), 105–125 (NALL…LTMN), 151–171 (LPQV…FAAI), 180–200 (WLLY…YAMV), 214–234 (AILF…LMLL), 247–267 (HTYW…FIIA), and 278–298 (AFMH…LATT).

Belongs to the UbiA prenyltransferase family. It depends on Mg(2+) as a cofactor.

It localises to the cell inner membrane. It catalyses the reaction all-trans-octaprenyl diphosphate + 4-hydroxybenzoate = 4-hydroxy-3-(all-trans-octaprenyl)benzoate + diphosphate. The protein operates within cofactor biosynthesis; ubiquinone biosynthesis. Catalyzes the prenylation of para-hydroxybenzoate (PHB) with an all-trans polyprenyl group. Mediates the second step in the final reaction sequence of ubiquinone-8 (UQ-8) biosynthesis, which is the condensation of the polyisoprenoid side chain with PHB, generating the first membrane-bound Q intermediate 3-octaprenyl-4-hydroxybenzoate. The polypeptide is 4-hydroxybenzoate octaprenyltransferase (Xylella fastidiosa (strain M23)).